The sequence spans 69 residues: A-kinase anchor protein inhibitor 1 (69 aa).

The disordered stretch occupies residues 39-69 (QESLRREGRPGDSRAWGQLGGCELTKKHEKK). Positions 41–50 (SLRREGRPGD) are enriched in basic and acidic residues.

Binds cAMP-dependent protein kinase (PKA). Interacts specifically with RII-regulatory subunits of PKA (PRKAR2A and PRKAR2B). Preferentially expressed in the neural tissues.

Functionally, protein kinase A (PKA)-binding protein. Binds to type II regulatory subunits of protein kinase A (PKA) and may block the A-kinase anchoring protein (AKAP)-mediated subcellular localization of PKA. The sequence is that of A-kinase anchor protein inhibitor 1 from Mus musculus (Mouse).